A 1303-amino-acid chain; its full sequence is Zinc finger CCCH domain-containing protein 4 (1303 aa).

The segment covering 1–33 (MEAAPGTPPPPPSESPPPPSPPPPSTPSPPPCS) has biased composition (pro residues). Residues 1–388 (MEAAPGTPPP…RDHDKPHQQS (388 aa)) form a disordered region. A compositionally biased stretch (acidic residues) spans 53-73 (DREDGELEEGELEDDGAEETQ). Phosphothreonine is present on residues threonine 72 and threonine 75. Serine 76, serine 92, and serine 94 each carry phosphoserine. Basic and acidic residues predominate over residues 80-99 (ERSRKEKGEKHHSDSDEEKS). The stretch at 95 to 128 (DEEKSHRRLKRKRKKEREKEKRRSKKRRKSKHKR) forms a coiled coil. Residues 100–130 (HRRLKRKRKKEREKEKRRSKKRRKSKHKRHA) show a composition bias toward basic residues. Over residues 135–144 (DFSDFSDDSD) the composition is skewed to acidic residues. Tyrosine 155 is modified (phosphotyrosine). Residues 194–218 (EDYENEQYGEYEGDEEEDMGKEDYD) are compositionally biased toward acidic residues. The segment covering 219–235 (DFTKELNQYRRAKEGSS) has biased composition (basic and acidic residues). Over residues 238–251 (RGSRGRGRGYRGRG) the composition is skewed to basic residues. The span at 252–274 (SRGGSRGRGMGRGSRGRGRGSMG) shows a compositional bias: gly residues. The span at 278-304 (PEDEEDFYEEEMDYGESEEPMGDDDYD) shows a compositional bias: acidic residues. The span at 305 to 321 (EYSKELNQYRRSKDSRG) shows a compositional bias: basic and acidic residues. Basic residues predominate over residues 323 to 346 (GLSRGRGRGSRGRGKGMGRGRGRG). Residues 358-369 (NDDEDFYDEDMG) show a composition bias toward acidic residues. Basic and acidic residues predominate over residues 377 to 388 (RSRDHDKPHQQS). 3 C3H1-type zinc fingers span residues 390–417 (KKGK…HDIE), 419–446 (PKKR…HGDF), and 447–470 (PCKL…HDPL). The span at 486–496 (AEAGAEDEKEV) shows a compositional bias: acidic residues. The interval 486 to 571 (AEAGAEDEKE…HEPLSPQQLQ (86 aa)) is disordered. Pro residues-rich tracts occupy residues 507–529 (LPKP…PQAP) and 539–558 (GGPP…PQMP). Arginine 601 carries the asymmetric dimethylarginine modification. Pro residues predominate over residues 605 to 624 (PGGPPGPMGPGPNMGPPGPM). Disordered stretches follow at residues 605–685 (PGGP…SGMM), 710–955 (GLLG…PRSQ), and 996–1288 (PPVP…ASLK). The span at 630–650 (PDMHPDMHPDMHPDMHADMHA) shows a compositional bias: basic and acidic residues. A compositionally biased stretch (pro residues) spans 659-673 (NPGPPMGPGGPPMMP). 2 stretches are compositionally biased toward basic and acidic residues: residues 717–739 (DYGH…HPLE) and 782–795 (ERAR…KQDR). The stretch at 767–800 (RALYLRIQQKQQEEEERARRLAESSKQDRENEEG) forms a coiled coil. Residues serine 807 and serine 808 each carry the phosphoserine modification. The segment covering 815–843 (SSVTSILKTLRQQTSSRPPASVGELSSSG) has biased composition (polar residues). The span at 860–875 (ADPRLSRDPRLTRHVE) shows a compositional bias: basic and acidic residues. Serine 904, serine 907, and serine 908 each carry phosphoserine. Over residues 904-918 (SLHSSPVGPSSSKGS) the composition is skewed to low complexity. 2 stretches are compositionally biased toward polar residues: residues 1028 to 1038 (GASTDSSTQGA) and 1053 to 1062 (VNATGSSAAP). Basic and acidic residues predominate over residues 1067-1084 (KPSDPRVRKAPTDPRLQK). Low complexity predominate over residues 1097–1110 (PGPAEAPSPTASPS). Position 1104 is a phosphoserine (serine 1104). At threonine 1106 the chain carries Phosphothreonine. Serine 1108, serine 1110, and serine 1114 each carry phosphoserine. Threonine 1118 is modified (phosphothreonine). Over residues 1129–1139 (GGLGQGGGGGQ) the composition is skewed to gly residues. The segment covering 1224–1234 (KAAAAPAATTA) has biased composition (low complexity). The span at 1235 to 1245 (TPPPEGAPPQP) shows a compositional bias: pro residues. The segment covering 1259 to 1268 (VKQTPKTGSG) has biased composition (polar residues). Residues serine 1269 and serine 1275 each carry the phosphoserine modification.

This sequence belongs to the suppressor of sable family. Interacts with WDR82.

It localises to the chromosome. RNA-binding protein that suppresses transcription of long non-coding RNAs (lncRNAs). LncRNAs are defined as transcripts more than 200 nucleotides that are not translated into protein. Together with WDR82, part of a transcription termination checkpoint that promotes transcription termination of lncRNAs and their subsequent degradation by the exosome. The transcription termination checkpoint is activated by the inefficiently spliced first exon of lncRNAs. The chain is Zinc finger CCCH domain-containing protein 4 from Homo sapiens (Human).